The chain runs to 372 residues: N-acetylneuraminate epimerase 1 (372 aa).

The N-terminal stretch at 1-25 is a signal peptide; that stretch reads MITMKVKNFIYLPFCLFIGTSVAGA. Kelch repeat units follow at residues 44 to 88, 90 to 141, 143 to 177, 178 to 223, 226 to 269, 291 to 340, and 342 to 371; these read KIYI…TIID, KIYV…FIHN, HAVS…KVNR, DYFS…IFAE, IYIL…VSGA, EKYS…PWQG, and MLIL…IKIV. Glu232 (proton acceptor) is an active-site residue.

Belongs to the NanM family. Homodimer.

It is found in the periplasm. It carries out the reaction N-acetyl-alpha-neuraminate = N-acetyl-beta-neuraminate. Functionally, converts alpha-N-acetylneuranimic acid (Neu5Ac) to the beta-anomer, accelerating the equilibrium between the alpha- and beta-anomers. Probably facilitates sialidase-negative bacteria to compete successfully for limited amounts of extracellular Neu5Ac, which is likely taken up in the beta-anomer. In addition, the rapid removal of sialic acid from solution might be advantageous to the bacterium to damp down host responses. This chain is N-acetylneuraminate epimerase 1, found in Escherichia coli O6:H1 (strain CFT073 / ATCC 700928 / UPEC).